A 466-amino-acid polypeptide reads, in one-letter code: Ribulose bisphosphate carboxylase large chain (466 aa).

Lys-5 is subject to N6,N6,N6-trimethyllysine. The substrate site is built by Asn-114 and Thr-164. Residue Lys-166 is the Proton acceptor of the active site. Lys-168 is a binding site for substrate. Mg(2+)-binding residues include Lys-192, Asp-194, and Glu-195. Lys-192 bears the N6-carboxylysine mark. His-285 serves as the catalytic Proton acceptor. Arg-286, His-318, and Ser-370 together coordinate substrate.

The protein belongs to the RuBisCO large chain family. Type I subfamily. In terms of assembly, heterohexadecamer of 8 large chains and 8 small chains; disulfide-linked. The disulfide link is formed within the large subunit homodimers. The cofactor is Mg(2+). In terms of processing, the disulfide bond which can form in the large chain dimeric partners within the hexadecamer appears to be associated with oxidative stress and protein turnover.

Its subcellular location is the plastid. The protein localises to the chloroplast. The catalysed reaction is 2 (2R)-3-phosphoglycerate + 2 H(+) = D-ribulose 1,5-bisphosphate + CO2 + H2O. The enzyme catalyses D-ribulose 1,5-bisphosphate + O2 = 2-phosphoglycolate + (2R)-3-phosphoglycerate + 2 H(+). Functionally, ruBisCO catalyzes two reactions: the carboxylation of D-ribulose 1,5-bisphosphate, the primary event in carbon dioxide fixation, as well as the oxidative fragmentation of the pentose substrate in the photorespiration process. Both reactions occur simultaneously and in competition at the same active site. The sequence is that of Ribulose bisphosphate carboxylase large chain from Drosophyllum lusitanicum (Portuguese sundew).